The chain runs to 156 residues: MSRRTRAILRPVTADPLYASRLVTMMTNKLMKEGKKATAERILYSALERVQERTGREPLDVFNQAVLNCTPRIEVKARRVGGATYQVPMEVRQERGTSLALRWLVQFSRKRSGKSMVDKLSNELMDAANDTGSAVRKREETHRMAEANKAFAHYRY.

It belongs to the universal ribosomal protein uS7 family. In terms of assembly, part of the 30S ribosomal subunit. Contacts proteins S9 and S11.

Its function is as follows. One of the primary rRNA binding proteins, it binds directly to 16S rRNA where it nucleates assembly of the head domain of the 30S subunit. Is located at the subunit interface close to the decoding center, probably blocks exit of the E-site tRNA. In Gloeobacter violaceus (strain ATCC 29082 / PCC 7421), this protein is Small ribosomal subunit protein uS7.